Reading from the N-terminus, the 240-residue chain is Chromatin structure-remodeling complex protein BSH (240 aa).

The protein belongs to the SNF5 family. In terms of assembly, interacts with SWI3A and SWI3B, but not with BRM. In terms of tissue distribution, expressed in roots, stems, leaves, flowers and siliques.

Its subcellular location is the nucleus. Functionally, component of a multiprotein complex equivalent of the yeast SWI/SNF complex, an ATP-dependent chromatin-remodeling complex, which is required for the positive and negative regulation of gene expression of a large number of genes. It changes chromatin structure by altering DNA-histone contacts within a nucleosome, leading eventually to a change in nucleosome position, thus facilitating or repressing binding of gene-specific transcription factors. This Arabidopsis thaliana (Mouse-ear cress) protein is Chromatin structure-remodeling complex protein BSH (BSH).